The primary structure comprises 402 residues: Phosphoglycerate kinase (402 aa).

Residues 24–26, Arg-40, 63–66, Arg-122, and Arg-155 each bind substrate; these read DFN and HFGR. ATP is bound by residues Lys-206, Gly-297, Glu-328, and 357-360; that span reads GGDS.

It belongs to the phosphoglycerate kinase family. In terms of assembly, monomer.

The protein resides in the cytoplasm. It catalyses the reaction (2R)-3-phosphoglycerate + ATP = (2R)-3-phospho-glyceroyl phosphate + ADP. It participates in carbohydrate degradation; glycolysis; pyruvate from D-glyceraldehyde 3-phosphate: step 2/5. In Synechococcus sp. (strain CC9311), this protein is Phosphoglycerate kinase.